The chain runs to 192 residues: Putative BTB/POZ domain-containing protein At4g04090 (192 aa).

Residues 23 to 96 (VDVRLMARDS…TYSDGSMLSE (74 aa)) form the BTB domain.

It participates in protein modification; protein ubiquitination. May act as a substrate-specific adapter of an E3 ubiquitin-protein ligase complex (CUL3-RBX1-BTB) which mediates the ubiquitination and subsequent proteasomal degradation of target proteins. The protein is Putative BTB/POZ domain-containing protein At4g04090 of Arabidopsis thaliana (Mouse-ear cress).